Reading from the N-terminus, the 277-residue chain is Putative hydro-lyase BPP3031 (277 aa).

Belongs to the D-glutamate cyclase family.

This is Putative hydro-lyase BPP3031 from Bordetella parapertussis (strain 12822 / ATCC BAA-587 / NCTC 13253).